Here is a 239-residue protein sequence, read N- to C-terminus: Ribosomal RNA small subunit methyltransferase G (239 aa).

Residues G77, F82, A128–E129, and R147 each bind S-adenosyl-L-methionine.

This sequence belongs to the methyltransferase superfamily. RNA methyltransferase RsmG family.

The protein localises to the cytoplasm. In terms of biological role, specifically methylates the N7 position of guanine in position 535 of 16S rRNA. The chain is Ribosomal RNA small subunit methyltransferase G from Bacillus cereus (strain G9842).